The following is a 496-amino-acid chain: Glutamyl-tRNA(Gln) amidotransferase subunit A (496 aa).

Residues lysine 75 and serine 150 each act as charge relay system in the active site. Serine 174 functions as the Acyl-ester intermediate in the catalytic mechanism.

It belongs to the amidase family. GatA subfamily. Heterotrimer of A, B and C subunits.

The catalysed reaction is L-glutamyl-tRNA(Gln) + L-glutamine + ATP + H2O = L-glutaminyl-tRNA(Gln) + L-glutamate + ADP + phosphate + H(+). Its function is as follows. Allows the formation of correctly charged Gln-tRNA(Gln) through the transamidation of misacylated Glu-tRNA(Gln) in organisms which lack glutaminyl-tRNA synthetase. The reaction takes place in the presence of glutamine and ATP through an activated gamma-phospho-Glu-tRNA(Gln). The chain is Glutamyl-tRNA(Gln) amidotransferase subunit A from Burkholderia cenocepacia (strain HI2424).